An 838-amino-acid chain; its full sequence is E3 ubiquitin-protein ligase RNF19A (838 aa).

The TRIAD supradomain stretch occupies residues 128-351 (DFIECPLCLL…LSPSGCTFWG (224 aa)). C132, C135, C150, H152, C155, C158, C176, C179, C219, C224, C241, C246, C251, C254, H259, C264, C301, and C304 together coordinate Zn(2+). The RING-type 1 zinc finger occupies 132-179 (CPLCLLRHSKDRFPEIMTCHHRSCVDCLRQYLRIEISESRVNISCPEC). An IBR-type zinc finger spans residues 199 to 264 (EKYEEFMLRR…KQIWHPNQTC (66 aa)). The segment at 301–332 (CPRCAAYIIKMNDGSCNHMTCAVCGCEFCWLC) adopts an RING-type 2; atypical zinc-finger fold. C316 is an active-site residue. Zn(2+) contacts are provided by C321, C324, C329, C332, H340, and C347. The next 2 helical transmembrane spans lie at 368-388 (LVGAPVGIALIAGIAIPAMII) and 424-444 (VIVSPVVAAVTVGIGVPIMLA). 2 disordered regions span residues 622 to 685 (SKPS…SNMK) and 700 to 721 (QQSTNSSEFEAPSLSDSMPSVA). S631 is modified (phosphoserine). Residues 631–644 (SGSSSVDDGSAARS) show a composition bias toward low complexity. An interaction with CASR region spans residues 660 to 838 (ATKWSKEATA…ELKVAIQTDI (179 aa)). Residues 671–683 (KKSKSGKLRKKSN) are compositionally biased toward basic residues. Residues 700–717 (QQSTNSSEFEAPSLSDSM) show a composition bias toward polar residues.

It belongs to the RBR family. RNF19 subfamily. Interacts with UBE2L3 and UBE2L6. Also interacts with transcription factor Sp1. Interacts with SNCAIP, CASR and VCP.

It is found in the membrane. The protein localises to the cytoplasm. It localises to the cytoskeleton. The protein resides in the microtubule organizing center. Its subcellular location is the centrosome. It catalyses the reaction [E2 ubiquitin-conjugating enzyme]-S-ubiquitinyl-L-cysteine + [acceptor protein]-L-lysine = [E2 ubiquitin-conjugating enzyme]-L-cysteine + [acceptor protein]-N(6)-ubiquitinyl-L-lysine.. The protein operates within protein modification; protein ubiquitination. Functionally, E3 ubiquitin-protein ligase which accepts ubiquitin from E2 ubiquitin-conjugating enzymes UBE2L3 and UBE2L6 in the form of a thioester and then directly transfers the ubiquitin to targeted substrates, such as SNCAIP or CASR. The polypeptide is E3 ubiquitin-protein ligase RNF19A (RNF19A) (Sus scrofa (Pig)).